A 219-amino-acid chain; its full sequence is MNQLEMKKVAAKAALQFVKPDMIVGVGSGSTVNCFIEELGAFRDQIKGAVAASKASEELLRKQGIEVFSANDVSSLDIYVDGADEINPQKMMIKGGGAALTREKIVSSLAKNFICIVDSSKQVDILGSTFPLPVEVIPMARSQVARKLVALGGSPEWREGVITDNGNVILDVHNFIIMNPIEMEKELNNVAGVVTNGIFALNAAHTVIVGTPDGAKIIE.

Substrate is bound by residues 28–31 (SGST), 81–84 (DGAD), and 94–97 (KGGG). The active-site Proton acceptor is the E103. Substrate is bound at residue K121.

Belongs to the ribose 5-phosphate isomerase family. Homodimer.

It carries out the reaction aldehydo-D-ribose 5-phosphate = D-ribulose 5-phosphate. The protein operates within carbohydrate degradation; pentose phosphate pathway; D-ribose 5-phosphate from D-ribulose 5-phosphate (non-oxidative stage): step 1/1. Functionally, catalyzes the reversible conversion of ribose-5-phosphate to ribulose 5-phosphate. The protein is Ribose-5-phosphate isomerase A of Mannheimia succiniciproducens (strain KCTC 0769BP / MBEL55E).